A 176-amino-acid chain; its full sequence is dCTP deaminase (176 aa).

Residues 99-104 (RSTLAR) and D115 contribute to the dCTP site. E125 functions as the Proton donor/acceptor in the catalytic mechanism. DCTP is bound at residue Q163.

The protein belongs to the dCTP deaminase family. As to quaternary structure, homotrimer.

It catalyses the reaction dCTP + H2O + H(+) = dUTP + NH4(+). It participates in pyrimidine metabolism; dUMP biosynthesis; dUMP from dCTP (dUTP route): step 1/2. Functionally, catalyzes the deamination of dCTP to dUTP. The sequence is that of dCTP deaminase from Pyrobaculum arsenaticum (strain DSM 13514 / JCM 11321 / PZ6).